The primary structure comprises 204 residues: Demethylsterigmatocystin 6-O-methyltransferase stcP (204 aa).

Residues 48-49 (GG), D73, 93-94 (DF), and R109 each bind S-adenosyl-L-methionine. Residue H113 is the Proton acceptor of the active site.

This sequence belongs to the class I-like SAM-binding methyltransferase superfamily. Cation-independent O-methyltransferase family.

The catalysed reaction is 6-demethylsterigmatocystin + S-adenosyl-L-methionine = sterigmatocystin + S-adenosyl-L-homocysteine + H(+). It functions in the pathway mycotoxin biosynthesis; sterigmatocystin biosynthesis. In terms of biological role, norsolorinic acid reductase; part of the gene cluster that mediates the biosynthesis of sterigmatocystin (ST), a polyketide-derived furanocoumarin which is part of the most toxic and carcinogenic compounds among the known mycotoxins. The first step in the biosynthesis of sterigmatocystin is the production of hexanoate by the fatty acid synthase (FAS) units stcJ and stcK. The polyketide backbone is assembled by the non-reducing polyketide synthase stcA by condensation of the starter hexanoyl-CoA and 7 malonyl-CoA extender units followed by cyclization and release of norsolorinic acid. Norsolorinic acid is the first stable intermediate in the biosynthesis of sterigmatocystin and is converted into averantin (AVN) by the ketoreductase stcE which reduces the hexanoate ketone to an alcohol. Averantin is then oxidized into 5'-hydroxyaverantin (HAVN) by the cytochrome P450 monooxygenase stcF. 5'-hydroxyaverantin is further converted to 5'-oxyaverantin (OAVN) by the 5'-hydroxyaverantin dehydrogenase stcG. The next step is the conversion of OAVN into averufin (AVF) which is catalyzed by a yet to be identified enzyme. The cytochrome P450 monooxygenase stcB and the flavin-binding monooxygenase stcW are both required for the conversion of averufin to 1-hydroxyversicolorone. The esterase stcI probably catalyzes the formation of versiconal hemiacetal acetate from 1-hydroxyversicolorone. The oxydoreductase stcN then probably catalyzes the biosynthetic step from versiconal to versicolorin B (VERB). The next step is performed by the versicolorin B desaturase stcL to produce versicolorin A (VERA). The ketoreductase stcU and the cytochrome P450 monooxygenase stcS are involved in the conversion of versicolorin A to demethylsterigmatocystin. The Baeyer-Villiger oxidas stcQ and the reductase stcR might be involved in the biosynthetic step from versicolorin A to demethylsterigmatocystin. The final step in the biosynthesis of sterigmatocystin is the methylation of demethylsterigmatocystin catalyzed by the methyltransferase stcP. This is Demethylsterigmatocystin 6-O-methyltransferase stcP from Emericella nidulans (strain FGSC A4 / ATCC 38163 / CBS 112.46 / NRRL 194 / M139) (Aspergillus nidulans).